A 367-amino-acid polypeptide reads, in one-letter code: Spermidine/putrescine import ATP-binding protein PotA (367 aa).

An ABC transporter domain is found at 10–240 (IEFKNVSLDY…PINHFVANFI (231 aa)). 42–49 (GPSGSGKS) lines the ATP pocket.

This sequence belongs to the ABC transporter superfamily. Spermidine/putrescine importer (TC 3.A.1.11.1) family. In terms of assembly, the complex is composed of two ATP-binding proteins (PotA), two transmembrane proteins (PotB and PotC) and a solute-binding protein (PotD).

The protein resides in the cell membrane. It carries out the reaction ATP + H2O + polyamine-[polyamine-binding protein]Side 1 = ADP + phosphate + polyamineSide 2 + [polyamine-binding protein]Side 1.. Its function is as follows. Part of the ABC transporter complex PotABCD involved in spermidine/putrescine import. Responsible for energy coupling to the transport system. The chain is Spermidine/putrescine import ATP-binding protein PotA from Oenococcus oeni (strain ATCC BAA-331 / PSU-1).